A 137-amino-acid chain; its full sequence is Small ribosomal subunit protein bS16 (137 aa).

Basic and acidic residues-rich tracts occupy residues 80–99 (KSPE…KRLQ) and 111–125 (VATE…KEAP). The disordered stretch occupies residues 80–137 (KSPEEAQKGGMRKGEFKRLQAEQAAKAQKKAVATEEPKAEEAKEAPPAESQAAEGKEE). Over residues 126 to 137 (PAESQAAEGKEE) the composition is skewed to low complexity.

Belongs to the bacterial ribosomal protein bS16 family.

The protein is Small ribosomal subunit protein bS16 of Coxiella burnetii (strain Dugway 5J108-111).